Consider the following 437-residue polypeptide: Enolase 2 (437 aa).

K60 is covalently cross-linked (Glycyl lysine isopeptide (Lys-Gly) (interchain with G-Cter in ubiquitin)). S138 bears the Phosphoserine mark. H160 is a catalytic residue. S188 is subject to Phosphoserine. Residue K243 forms a Glycyl lysine isopeptide (Lys-Gly) (interchain with G-Cter in ubiquitin) linkage. Positions 247 and 296 each coordinate Mg(2+). The residue at position 313 (T313) is a Phosphothreonine. D321 provides a ligand contact to Mg(2+). T324 carries the phosphothreonine modification. K358 is covalently cross-linked (Glycyl lysine isopeptide (Lys-Gly) (interchain with G-Cter in ubiquitin)).

This sequence belongs to the enolase family. In terms of assembly, homodimer. Mg(2+) is required as a cofactor.

The protein resides in the cytoplasm. It catalyses the reaction (2R)-2-phosphoglycerate = phosphoenolpyruvate + H2O. It functions in the pathway carbohydrate degradation; glycolysis; pyruvate from D-glyceraldehyde 3-phosphate: step 4/5. The sequence is that of Enolase 2 (ENO2) from Saccharomyces cerevisiae (strain ATCC 204508 / S288c) (Baker's yeast).